The following is a 300-amino-acid chain: N-acetylmuramic acid 6-phosphate etherase (300 aa).

The 163-residue stretch at 55–217 (IAERLRAGGR…STGAMIRLGK (163 aa)) folds into the SIS domain. The active-site Proton donor is the glutamate 83. Residue glutamate 114 is part of the active site.

The protein belongs to the GCKR-like family. MurNAc-6-P etherase subfamily. In terms of assembly, homodimer.

The enzyme catalyses N-acetyl-D-muramate 6-phosphate + H2O = N-acetyl-D-glucosamine 6-phosphate + (R)-lactate. It functions in the pathway amino-sugar metabolism; N-acetylmuramate degradation. Functionally, specifically catalyzes the cleavage of the D-lactyl ether substituent of MurNAc 6-phosphate, producing GlcNAc 6-phosphate and D-lactate. This is N-acetylmuramic acid 6-phosphate etherase from Symbiobacterium thermophilum (strain DSM 24528 / JCM 14929 / IAM 14863 / T).